Reading from the N-terminus, the 238-residue chain is Sugar fermentation stimulation protein homolog (238 aa).

It belongs to the SfsA family.

This chain is Sugar fermentation stimulation protein homolog, found in Vibrio vulnificus (strain CMCP6).